Consider the following 211-residue polypeptide: Probable nicotinate-nucleotide adenylyltransferase (211 aa).

Belongs to the NadD family.

The enzyme catalyses nicotinate beta-D-ribonucleotide + ATP + H(+) = deamido-NAD(+) + diphosphate. Its pathway is cofactor biosynthesis; NAD(+) biosynthesis; deamido-NAD(+) from nicotinate D-ribonucleotide: step 1/1. In terms of biological role, catalyzes the reversible adenylation of nicotinate mononucleotide (NaMN) to nicotinic acid adenine dinucleotide (NaAD). This Corynebacterium kroppenstedtii (strain DSM 44385 / JCM 11950 / CIP 105744 / CCUG 35717) protein is Probable nicotinate-nucleotide adenylyltransferase.